A 509-amino-acid chain; its full sequence is Probable cytochrome P450 4ac1 (509 aa).

The heme site is built by glutamate 317 and cysteine 454.

The protein belongs to the cytochrome P450 family. Heme is required as a cofactor.

The protein localises to the endoplasmic reticulum membrane. The protein resides in the microsome membrane. In terms of biological role, may be involved in the metabolism of insect hormones and in the breakdown of synthetic insecticides. This is Probable cytochrome P450 4ac1 (Cyp4ac1) from Drosophila melanogaster (Fruit fly).